Consider the following 445-residue polypeptide: Tubulin beta chain (445 aa).

GTP contacts are provided by Q11, E69, S138, G142, T143, G144, N204, and N226. E69 contributes to the Mg(2+) binding site.

It belongs to the tubulin family. Dimer of alpha and beta chains. A typical microtubule is a hollow water-filled tube with an outer diameter of 25 nm and an inner diameter of 15 nM. Alpha-beta heterodimers associate head-to-tail to form protofilaments running lengthwise along the microtubule wall with the beta-tubulin subunit facing the microtubule plus end conferring a structural polarity. Microtubules usually have 13 protofilaments but different protofilament numbers can be found in some organisms and specialized cells. Mg(2+) is required as a cofactor.

It localises to the cytoplasm. Its subcellular location is the cytoskeleton. Its function is as follows. Tubulin is the major constituent of microtubules, a cylinder consisting of laterally associated linear protofilaments composed of alpha- and beta-tubulin heterodimers. Microtubules grow by the addition of GTP-tubulin dimers to the microtubule end, where a stabilizing cap forms. Below the cap, tubulin dimers are in GDP-bound state, owing to GTPase activity of alpha-tubulin. This chain is Tubulin beta chain, found in Coprinopsis cinerea (strain Okayama-7 / 130 / ATCC MYA-4618 / FGSC 9003) (Inky cap fungus).